The following is a 254-amino-acid chain: Acetylglutamate kinase (254 aa).

Residues 40–41 (GG), Arg-62, and Asn-158 contribute to the substrate site.

This sequence belongs to the acetylglutamate kinase family. ArgB subfamily.

Its subcellular location is the cytoplasm. The catalysed reaction is N-acetyl-L-glutamate + ATP = N-acetyl-L-glutamyl 5-phosphate + ADP. Its pathway is amino-acid biosynthesis; L-arginine biosynthesis; N(2)-acetyl-L-ornithine from L-glutamate: step 2/4. Catalyzes the ATP-dependent phosphorylation of N-acetyl-L-glutamate. The protein is Acetylglutamate kinase of Chloroflexus aurantiacus (strain ATCC 29366 / DSM 635 / J-10-fl).